The primary structure comprises 932 residues: Protocadherin gamma-A2 (932 aa).

Positions 1 to 28 (MAALQKLPHCRKLFLLCFLLATLWEARA) are cleaved as a signal peptide. Cadherin domains lie at 29 to 133 (GQIR…APRF), 134 to 242 (GVEE…APVF), 243 to 347 (TQPE…APEF), 348 to 452 (YMTS…APAF), 453 to 562 (SRTS…PPEI), and 570 to 682 (DGST…EPSA). At 29-692 (GQIRYSVREE…KPNDSDLTLY (664 aa)) the chain is on the extracellular side. 2 N-linked (GlcNAc...) asparagine glycosylation sites follow: Asn419 and Asn545. Residue Asn685 is glycosylated (N-linked (GlcNAc...) asparagine). Residues 693 to 713 (LVVAVAAVSCVFLAFVIVLLA) form a helical membrane-spanning segment. At 714-932 (HRLRRWHKSR…KKKSGKKEKK (219 aa)) the chain is on the cytoplasmic side. Disordered stretches follow at residues 798–841 (LEEE…WPNN) and 902–932 (ATLTNAAGKRDGKAPAGGNGNKKKSGKKEKK). The span at 806-841 (FSQQAPPNTDWRFSQAQRPGTSGSQNGDDTGTWPNN) shows a compositional bias: polar residues. The segment covering 922 to 932 (NKKKSGKKEKK) has biased composition (basic residues).

Its subcellular location is the cell membrane. Functionally, potential calcium-dependent cell-adhesion protein. May be involved in the establishment and maintenance of specific neuronal connections in the brain. The chain is Protocadherin gamma-A2 (PCDHGA2) from Pan troglodytes (Chimpanzee).